A 296-amino-acid chain; its full sequence is Endonuclease 5 (296 aa).

Residues 1 to 20 form the signal peptide; sequence MRLWIVSVLVLTHLVHGALC. A divalent metal cation-binding residues include W21 and H26. 21 to 26 is a substrate binding site; the sequence is WGKDGH. A disulfide bridge links C30 with C62. The a divalent metal cation site is built by D66 and H81. Residues 66–72, 81–84, and 91–96 each bind substrate; these read DEIKKLS, HYVN, and NYEYCR. 3 cysteine pairs are disulfide-bonded: C90-C243, C98-C108, and C223-C230. Substrate-binding residues include N115 and Y133. N115 carries N-linked (GlcNAc...) asparagine glycosylation. N134 carries N-linked (GlcNAc...) asparagine glycosylation. Residues H144, D148, and H154 each contribute to the a divalent metal cation site. Residues 144–193 are substrate binding; sequence HYMGDVHQPLHTGFLGDLGGNTIIVNWYHNKSNLHHVWDNMIIDSALETY. N-linked (GlcNAc...) asparagine glycosylation occurs at N173. Residues H178 and D182 each coordinate a divalent metal cation. N195 is a glycosylation site (N-linked (GlcNAc...) asparagine). The propeptide at 281-296 is removed in mature form; it reads ATLNRIFSAKPKLAGL.

This sequence belongs to the nuclease type I family. As to quaternary structure, monomer. Zn(2+) is required as a cofactor.

It carries out the reaction Endonucleolytic cleavage to 5'-phosphomononucleotide and 5'-phosphooligonucleotide end-products.. In terms of biological role, hydrolyzes, with low efficiency, only single-stranded DNA and RNA without apparent specificity for bases. Endonuclease that recognizes and cleaves some mismatches with high efficiency, including heteroduplex double-stranded DNA; mostly efficient on T/G, A/G and G/G mismatches, less efficient for T/T and poorly efficient for C/C, A/A, T/C and A/C. In Arabidopsis thaliana (Mouse-ear cress), this protein is Endonuclease 5.